We begin with the raw amino-acid sequence, 677 residues long: Methionine--tRNA ligase (677 aa).

A 'HIGH' region motif is present at residues 15 to 25; that stretch reads PYANGSIHLGH. Residues Cys146, Cys149, Cys159, and Cys162 each coordinate Zn(2+). A 'KMSKS' region motif is present at residues 333-337; that stretch reads KMSKS. Lys336 is an ATP binding site. A tRNA-binding domain is found at 575-677; it reads DFAKVDLRVA…DGAKPGQQVK (103 aa).

Belongs to the class-I aminoacyl-tRNA synthetase family. MetG type 1 subfamily. In terms of assembly, homodimer. Zn(2+) serves as cofactor.

The protein localises to the cytoplasm. The catalysed reaction is tRNA(Met) + L-methionine + ATP = L-methionyl-tRNA(Met) + AMP + diphosphate. Is required not only for elongation of protein synthesis but also for the initiation of all mRNA translation through initiator tRNA(fMet) aminoacylation. The polypeptide is Methionine--tRNA ligase (Klebsiella pneumoniae (strain 342)).